Here is a 350-residue protein sequence, read N- to C-terminus: Ketol-acid reductoisomerase (NADP(+)) (350 aa).

Residues 4 to 187 form the KARI N-terminal Rossmann domain; the sequence is VSITTDYSRM…GGARANIIKT (184 aa). NADP(+) contacts are provided by residues 30–33, arginine 53, threonine 58, and 88–91; these read YGSQ and DMVQ. Residue histidine 113 is part of the active site. Residue glycine 139 coordinates NADP(+). A KARI C-terminal knotted domain is found at 188-333; it reads TFKEETETDL…KQLRAKMVWL (146 aa). 4 residues coordinate Mg(2+): aspartate 196, glutamate 200, glutamate 232, and glutamate 236. Substrate is bound at residue serine 257.

It belongs to the ketol-acid reductoisomerase family. Mg(2+) is required as a cofactor.

The enzyme catalyses (2R)-2,3-dihydroxy-3-methylbutanoate + NADP(+) = (2S)-2-acetolactate + NADPH + H(+). The catalysed reaction is (2R,3R)-2,3-dihydroxy-3-methylpentanoate + NADP(+) = (S)-2-ethyl-2-hydroxy-3-oxobutanoate + NADPH + H(+). The protein operates within amino-acid biosynthesis; L-isoleucine biosynthesis; L-isoleucine from 2-oxobutanoate: step 2/4. It functions in the pathway amino-acid biosynthesis; L-valine biosynthesis; L-valine from pyruvate: step 2/4. Involved in the biosynthesis of branched-chain amino acids (BCAA). Catalyzes an alkyl-migration followed by a ketol-acid reduction of (S)-2-acetolactate (S2AL) to yield (R)-2,3-dihydroxy-isovalerate. In the isomerase reaction, S2AL is rearranged via a Mg-dependent methyl migration to produce 3-hydroxy-3-methyl-2-ketobutyrate (HMKB). In the reductase reaction, this 2-ketoacid undergoes a metal-dependent reduction by NADPH to yield (R)-2,3-dihydroxy-isovalerate. The sequence is that of Ketol-acid reductoisomerase (NADP(+)) from Xylella fastidiosa (strain 9a5c).